Reading from the N-terminus, the 278-residue chain is Transmembrane protein 41B (278 aa).

The disordered stretch occupies residues 1–31 (MQVHERSHTGGHTCQCNHGSEKKAPATGKVH). The next 6 helical transmembrane spans lie at 39–59 (MSLLILVSIFLCAASIMFLVY), 96–116 (FYVEVLVAYFTTYIFLQTFAI), 132–154 (FPLALFLVCLCSGLGASFSYLLS), 184–204 (LINYIIFLRITPFLPNWFINI), 212–232 (PLKVFFLGTFIGVAPPSFVAI), and 249–269 (SWNSVIILMVLAVLSILPAIF). The segment at 127-238 (GFLYPFPLAL…FVAIKAGTTL (112 aa)) is VTT domain; required for its function in autophagy.

This sequence belongs to the TMEM41 family.

It localises to the endoplasmic reticulum membrane. Its subcellular location is the endomembrane system. It carries out the reaction a 1,2-diacyl-sn-glycero-3-phospho-L-serine(in) = a 1,2-diacyl-sn-glycero-3-phospho-L-serine(out). The catalysed reaction is cholesterol(in) = cholesterol(out). The enzyme catalyses a 1,2-diacyl-sn-glycero-3-phosphocholine(in) = a 1,2-diacyl-sn-glycero-3-phosphocholine(out). It catalyses the reaction a 1,2-diacyl-sn-glycero-3-phosphoethanolamine(in) = a 1,2-diacyl-sn-glycero-3-phosphoethanolamine(out). In terms of biological role, phospholipid scramblase involved in lipid homeostasis and membrane dynamics processes. Has phospholipid scramblase activity toward cholesterol and phosphatidylserine, as well as phosphatidylethanolamine and phosphatidylcholine. Required for autophagosome formation: participates in early stages of autophagosome biogenesis at the endoplasmic reticulum (ER) membrane by reequilibrating the leaflets of the ER as lipids are extracted by atg2 (atg2a or atg2b) to mediate autophagosome assembly. In addition to autophagy, involved in other processes in which phospholipid scramblase activity is required. Required for normal motor neuron development. This Xenopus tropicalis (Western clawed frog) protein is Transmembrane protein 41B.